We begin with the raw amino-acid sequence, 156 residues long: 6,7-dimethyl-8-ribityllumazine synthase (156 aa).

5-amino-6-(D-ribitylamino)uracil-binding positions include Phe25, 59–61, and 83–85; these read AWE and AVI. 88 to 89 provides a ligand contact to (2S)-2-hydroxy-3-oxobutyl phosphate; sequence ST. His91 functions as the Proton donor in the catalytic mechanism. Position 116 (Asn116) interacts with 5-amino-6-(D-ribitylamino)uracil. Arg130 provides a ligand contact to (2S)-2-hydroxy-3-oxobutyl phosphate.

Belongs to the DMRL synthase family. As to quaternary structure, forms an icosahedral capsid composed of 60 subunits, arranged as a dodecamer of pentamers.

It catalyses the reaction (2S)-2-hydroxy-3-oxobutyl phosphate + 5-amino-6-(D-ribitylamino)uracil = 6,7-dimethyl-8-(1-D-ribityl)lumazine + phosphate + 2 H2O + H(+). It participates in cofactor biosynthesis; riboflavin biosynthesis; riboflavin from 2-hydroxy-3-oxobutyl phosphate and 5-amino-6-(D-ribitylamino)uracil: step 1/2. Functionally, catalyzes the formation of 6,7-dimethyl-8-ribityllumazine by condensation of 5-amino-6-(D-ribitylamino)uracil with 3,4-dihydroxy-2-butanone 4-phosphate. This is the penultimate step in the biosynthesis of riboflavin. The chain is 6,7-dimethyl-8-ribityllumazine synthase from Acinetobacter baylyi (strain ATCC 33305 / BD413 / ADP1).